A 1710-amino-acid chain; its full sequence is Ankyrin repeat domain-containing protein 26 (1710 aa).

Residues 1–41 (MKKIFSKKGESPLGSFARRQRSSAGGGGEPGEGAYSQPGYH) form a disordered region. Ser-11 and Ser-15 each carry phosphoserine. ANK repeat units follow at residues 45 to 75 (RDLGKIHKAASAGNVAKVQQILLLRKNGLND), 79 to 108 (MNRTALHLACANGHPEVVTLLVDRKCQLNV), 112 to 141 (ENRTALMKAVQCQEEKCATILLEHGADPNL), 145 to 174 (HGNTALHYAVYNEDISVATKLLLYDANIEA), and 178 to 207 (DDLTPLLLAVSGKKQQMVEFLIKKKANVNA). A disordered region spans residues 222-274 (KEERIPKHSSQNSNSVDESSEDSLSRLSGKPGVDDSWPTSDDEDLNFDTKNVP). Phosphoserine is present on residues Ser-241, Ser-261, Ser-489, and Ser-530. The interval 504-630 (DSVPNKAGGM…EKRTSKESVN (127 aa)) is disordered. The stretch at 529-566 (ASEEEQEREGSENNQPQVEEERKKHRNNEMEVSANIHD) forms a coiled coil. A compositionally biased stretch (acidic residues) spans 569-580 (TDDAEDDDDDDG). Basic and acidic residues-rich tracts occupy residues 586–602 (KSGETDHQQFPRKENKE) and 613–626 (KEVKSTEKEKRTSK). Ser-631 is modified (phosphoserine). The segment covering 650–660 (DSSLSEIDEDE) has biased composition (acidic residues). A disordered region spans residues 650-698 (DSSLSEIDEDEGRPTKKTSNEKNKVKNQIQSMDDVDDLTQSSETASEDC). Over residues 661-673 (GRPTKKTSNEKNK) the composition is skewed to basic and acidic residues. Coiled-coil stretches lie at residues 743-873 (KNHC…NARM), 905-1472 (EEEK…MVEL), 1517-1587 (NNFA…NTKL), and 1649-1674 (LSKMQQELEKNITRELKEAAAELESG). The interval 892 to 912 (AQKKMNSENSHSHEEEKDLSH) is disordered.

As to quaternary structure, interacts with TRIO. Interacts with GPS2. Interacts with CCDC85B. Interacts with HMMR.

In terms of biological role, acts as a regulator of adipogenesis. Involved in the regulation of the feeding behavior. The polypeptide is Ankyrin repeat domain-containing protein 26 (Homo sapiens (Human)).